The primary structure comprises 383 residues: Arginine biosynthesis bifunctional protein ArgJ 1 (383 aa).

Positions 1–25 (MTVTAPKGSTGGGCRRGSKESGQPD) are disordered. Residues Thr-146, Lys-168, Thr-179, Glu-259, Asn-378, and Ser-383 each contribute to the substrate site. Thr-179 acts as the Nucleophile in catalysis.

Belongs to the ArgJ family. As to quaternary structure, heterotetramer of two alpha and two beta chains.

The protein resides in the cytoplasm. The enzyme catalyses N(2)-acetyl-L-ornithine + L-glutamate = N-acetyl-L-glutamate + L-ornithine. The catalysed reaction is L-glutamate + acetyl-CoA = N-acetyl-L-glutamate + CoA + H(+). Its pathway is amino-acid biosynthesis; L-arginine biosynthesis; L-ornithine and N-acetyl-L-glutamate from L-glutamate and N(2)-acetyl-L-ornithine (cyclic): step 1/1. It participates in amino-acid biosynthesis; L-arginine biosynthesis; N(2)-acetyl-L-ornithine from L-glutamate: step 1/4. Its function is as follows. Catalyzes two activities which are involved in the cyclic version of arginine biosynthesis: the synthesis of N-acetylglutamate from glutamate and acetyl-CoA as the acetyl donor, and of ornithine by transacetylation between N(2)-acetylornithine and glutamate. The chain is Arginine biosynthesis bifunctional protein ArgJ 1 from Streptomyces clavuligerus.